The primary structure comprises 444 residues: Phosphoglucosamine mutase (444 aa).

The active-site Phosphoserine intermediate is S101. Mg(2+) is bound by residues S101, D240, D242, and D244. Phosphoserine is present on S101.

The protein belongs to the phosphohexose mutase family. The cofactor is Mg(2+). Activated by phosphorylation.

The catalysed reaction is alpha-D-glucosamine 1-phosphate = D-glucosamine 6-phosphate. Functionally, catalyzes the conversion of glucosamine-6-phosphate to glucosamine-1-phosphate. The protein is Phosphoglucosamine mutase of Aeromonas salmonicida (strain A449).